The following is a 160-amino-acid chain: Ribosomal RNA large subunit methyltransferase H (160 aa).

Residues L76 and G108 each contribute to the S-adenosyl-L-methionine site.

Belongs to the RNA methyltransferase RlmH family. Homodimer.

It localises to the cytoplasm. It carries out the reaction pseudouridine(1915) in 23S rRNA + S-adenosyl-L-methionine = N(3)-methylpseudouridine(1915) in 23S rRNA + S-adenosyl-L-homocysteine + H(+). Its function is as follows. Specifically methylates the pseudouridine at position 1915 (m3Psi1915) in 23S rRNA. This chain is Ribosomal RNA large subunit methyltransferase H, found in Nitrobacter winogradskyi (strain ATCC 25391 / DSM 10237 / CIP 104748 / NCIMB 11846 / Nb-255).